We begin with the raw amino-acid sequence, 479 residues long: Glutamyl-tRNA reductase (479 aa).

Substrate-binding positions include 49–52 (TCNR), Ser-109, 114–116 (EQQ), and Gln-120. Residue Cys-50 is the Nucleophile of the active site. 191–196 (GAGSMG) contacts NADP(+).

Belongs to the glutamyl-tRNA reductase family. As to quaternary structure, homodimer.

The catalysed reaction is (S)-4-amino-5-oxopentanoate + tRNA(Glu) + NADP(+) = L-glutamyl-tRNA(Glu) + NADPH + H(+). Its pathway is porphyrin-containing compound metabolism; protoporphyrin-IX biosynthesis; 5-aminolevulinate from L-glutamyl-tRNA(Glu): step 1/2. Functionally, catalyzes the NADPH-dependent reduction of glutamyl-tRNA(Glu) to glutamate 1-semialdehyde (GSA). This Rhodococcus jostii (strain RHA1) protein is Glutamyl-tRNA reductase.